A 497-amino-acid chain; its full sequence is Replication factor C large subunit (497 aa).

An ATP-binding site is contributed by 50 to 57 (GPAGVGKT). Residues 428 to 455 (KRRSLGRDEGKAFFEKKPKKQTPDKKQM) are compositionally biased toward basic and acidic residues. A disordered region spans residues 428-497 (KRRSLGRDEG…AKPQKTLFDF (70 aa)). Residues 456-465 (DLTQIINSTP) are compositionally biased toward polar residues. Residues 466-476 (QEDKVEKKETE) are compositionally biased toward basic and acidic residues.

The protein belongs to the activator 1 small subunits family. RfcL subfamily. In terms of assembly, heteromultimer composed of small subunits (RfcS) and large subunits (RfcL).

Its function is as follows. Part of the RFC clamp loader complex which loads the PCNA sliding clamp onto DNA. In Methanococcoides burtonii (strain DSM 6242 / NBRC 107633 / OCM 468 / ACE-M), this protein is Replication factor C large subunit.